We begin with the raw amino-acid sequence, 110 residues long: Protein RnfH (110 aa).

The segment at 90–110 is disordered; that stretch reads VDKTRREGSIEGRKWLPKDSR.

Belongs to the UPF0125 (RnfH) family.

The chain is Protein RnfH from Burkholderia mallei (strain NCTC 10229).